The chain runs to 388 residues: Transcriptional regulatory protein EmbR (388 aa).

The ompR/PhoB-type DNA-binding region spans 2–105 (AGSATVEKRL…AAPPGYRLSI (104 aa)). An FHA domain is found at 308 to 357 (TRIGRLHDNDIVLDSANVSRHHAVIVDTGTNYVINDLRSSNGVHVQHERI).

Belongs to the AfsR/DnrI/RedD regulatory family. Post-translationally, phosphorylated on threonine residue(s).

In terms of biological role, positively regulates the transcription of the embCAB operon. Exhibits ATPase and GTPase activities. This is Transcriptional regulatory protein EmbR (embR) from Mycobacterium bovis (strain ATCC BAA-935 / AF2122/97).